Consider the following 412-residue polypeptide: Imidazolonepropionase (412 aa).

Positions 76 and 78 each coordinate Fe(3+). The Zn(2+) site is built by His-76 and His-78. Residues Arg-85, Tyr-148, and His-181 each coordinate 4-imidazolone-5-propanoate. Residue Tyr-148 coordinates N-formimidoyl-L-glutamate. Residue His-242 participates in Fe(3+) binding. Residue His-242 coordinates Zn(2+). 4-imidazolone-5-propanoate is bound at residue Glu-245. Fe(3+) is bound at residue Asp-317. Asp-317 lines the Zn(2+) pocket. Positions 319 and 321 each coordinate N-formimidoyl-L-glutamate. Ser-322 contributes to the 4-imidazolone-5-propanoate binding site.

This sequence belongs to the metallo-dependent hydrolases superfamily. HutI family. The cofactor is Zn(2+). It depends on Fe(3+) as a cofactor.

The protein resides in the cytoplasm. The enzyme catalyses 4-imidazolone-5-propanoate + H2O = N-formimidoyl-L-glutamate. Its pathway is amino-acid degradation; L-histidine degradation into L-glutamate; N-formimidoyl-L-glutamate from L-histidine: step 3/3. Catalyzes the hydrolytic cleavage of the carbon-nitrogen bond in imidazolone-5-propanoate to yield N-formimidoyl-L-glutamate. It is the third step in the universal histidine degradation pathway. The chain is Imidazolonepropionase from Staphylococcus aureus (strain Mu50 / ATCC 700699).